A 234-amino-acid polypeptide reads, in one-letter code: Iron-sulfur cluster co-chaperone protein HscB (234 aa).

A divalent metal cation contacts are provided by C40, C43, C57, and C60. The J domain maps to 71 to 143 (DYFSLMNCNR…LTRGLYLLKL (73 aa)).

This sequence belongs to the HscB family. As to quaternary structure, interacts with ISCU and HSPA9 to form an iron-sulfur transfer complex. Interacts with SDHAF1 (via the first LYR motif); the interaction recruits the iron-sulfur transfer complex composed of HSC20, HSPA9 and ISCU and mediates the incorporation of iron-sulfur clusters into SDHB which also interacts with HSC20. Interacts with the cytoplasmic form of ISCU and with CIA complex member CIAO1 (via LYR motif). In terms of assembly, homodimer. Interacts with ISCU (cytoplasmic form); this interaction stabilizes the (Fe-S) clusters on ISCU. Interacts with the CIA complex member CIAO1 (via LYR motif).

The protein localises to the cytoplasm. The protein resides in the mitochondrion. Its pathway is cofactor biosynthesis; iron-sulfur cluster biosynthesis. Its function is as follows. Acts as a co-chaperone in iron-sulfur cluster assembly in mitochondria. Required for incorporation of iron-sulfur clusters into SDHB, the iron-sulfur protein subunit of succinate dehydrogenase that is involved in complex II of the mitochondrial electron transport chain. Recruited to SDHB by interaction with SDHAF1 which first binds SDHB and then recruits the iron-sulfur transfer complex formed by HSC20, HSPA9 and ISCU through direct binding to HSC20. Plays an essential role in hematopoiesis. In terms of biological role, acts as a co-chaperone in iron-sulfur cluster assembly in the cytoplasm. Also mediates complex formation between components of the cytosolic iron-sulfur biogenesis pathway and the CIA targeting complex composed of CIAO1, DIPK1B/FAM69B and MMS19 by binding directly to the scaffold protein ISCU and to CIAO1. This facilitates iron-sulfur cluster insertion into a number of cytoplasmic and nuclear proteins including POLD1, ELP3, DPYD and PPAT. In Mus musculus (Mouse), this protein is Iron-sulfur cluster co-chaperone protein HscB.